The primary structure comprises 396 residues: 3-amino-4-hydroxybenzoate 2-monooxygenase PtnB3 (396 aa).

Residues Ala-19, 38-39 (EQ), and Arg-112 contribute to the FAD site. The active-site Proton acceptor is Tyr-217. Asp-295 serves as a coordination point for FAD.

Belongs to the 6-hydroxynicotinate 3-monooxygenase family. It depends on FAD as a cofactor.

The enzyme catalyses 3-amino-4-hydroxybenzoate + NADPH + O2 + H(+) = 3-amino-2,4-dihydroxybenzoate + NADP(+) + H2O. Its pathway is antibiotic biosynthesis. Its function is as follows. Part of a gene cluster involved in the biosynthesis of thioplatencin (ThioPTN) and platencin (PTN), potent and selective inhibitors of bacterial and mammalian fatty acid synthases. Catalyzes the hydroxylation of 3-amino-4-hydroxybenzoate (3,4-AHBA) to 3-amino-2,4-dihydroxybenzoate (3,2,4-ADHBA). This chain is 3-amino-4-hydroxybenzoate 2-monooxygenase PtnB3, found in Streptomyces platensis.